A 119-amino-acid polypeptide reads, in one-letter code: Protein TusC (119 aa).

Belongs to the DsrF/TusC family. In terms of assembly, heterohexamer, formed by a dimer of trimers. The hexameric TusBCD complex contains 2 copies each of TusB, TusC and TusD. The TusBCD complex interacts with TusE.

It localises to the cytoplasm. Functionally, part of a sulfur-relay system required for 2-thiolation of 5-methylaminomethyl-2-thiouridine (mnm(5)s(2)U) at tRNA wobble positions. The chain is Protein TusC from Shigella sonnei (strain Ss046).